The primary structure comprises 260 residues: Neuraminyllactose-binding hemagglutinin (260 aa).

The signal sequence occupies residues 1–27 (MKTNGHFKDFAWKKCFLGASVVALLVG). A lipid anchor (N-palmitoyl cysteine) is attached at Cys-28. Residue Cys-28 is the site of S-diacylglycerol cysteine attachment.

The protein localises to the cell outer membrane. The sequence is that of Neuraminyllactose-binding hemagglutinin (hpaA) from Helicobacter pylori (strain J99 / ATCC 700824) (Campylobacter pylori J99).